A 212-amino-acid polypeptide reads, in one-letter code: MAASSAVTANYVLKPPPFALDALEPHMSKQTLEFHWGKHHRAYVDNLKKQVLGTELEGKPLEHIIHSTYNNGDLLPAFNNAAQAWNHEFFWESMKPGGGGKPSGELLALLERDFTSYEKFYEEFNAAAATQFGAGWAWLAYSNEKLKVVKTPNAVNPLVLGSFPLLTIDVWEHAYYLDFQNRRPDYIKTFMTNLVSWEAVSARLEAAKAASA.

The residue at position 2 (A2) is an N-acetylalanine. Fe cation contacts are provided by H35, H87, D169, and H173.

Belongs to the iron/manganese superoxide dismutase family. In terms of assembly, homodimer. Interacts with cpn20/cpn21. Fe cation serves as cofactor.

The protein localises to the cell membrane. It is found in the plastid. The protein resides in the chloroplast membrane. Its subcellular location is the chloroplast stroma. The enzyme catalyses 2 superoxide + 2 H(+) = H2O2 + O2. Its activity is regulated as follows. Activated by cpn20/cpn21. Functionally, destroys superoxide anion radicals which are normally produced within the cells and which are toxic to biological systems. The sequence is that of Superoxide dismutase [Fe] 1, chloroplastic (FSD1) from Arabidopsis thaliana (Mouse-ear cress).